We begin with the raw amino-acid sequence, 148 residues long: Globin-3 (148 aa).

Residues 2 to 148 form the Globin domain; that stretch reads TLTKHEQDIL…HVFPMMAAEI (147 aa). His99 provides a ligand contact to heme.

This sequence belongs to the globin family. In terms of assembly, monomer.

Its function is as follows. Oxygen binding protein. This Paramphistomum epiclitum protein is Globin-3.